A 149-amino-acid chain; its full sequence is uncharacterized protein (149 aa).

The protein to Rhizobium NGR234A y4oM.

This is an uncharacterized protein from Sinorhizobium fredii (strain NBRC 101917 / NGR234).